A 597-amino-acid polypeptide reads, in one-letter code: UvrABC system protein C (597 aa).

Positions 15-93 (NSPGVYQYFD…IKKHQPRFNV (79 aa)) constitute a GIY-YIG domain. The region spanning 207 to 242 (KDSLQRFRNQMKQHSEKMEFEDAQRIKNKIDVLENY) is the UVR domain.

The protein belongs to the UvrC family. As to quaternary structure, interacts with UvrB in an incision complex.

It is found in the cytoplasm. In terms of biological role, the UvrABC repair system catalyzes the recognition and processing of DNA lesions. UvrC both incises the 5' and 3' sides of the lesion. The N-terminal half is responsible for the 3' incision and the C-terminal half is responsible for the 5' incision. In Christiangramia forsetii (strain DSM 17595 / CGMCC 1.15422 / KT0803) (Gramella forsetii), this protein is UvrABC system protein C.